The chain runs to 313 residues: Dihydroorotate dehydrogenase B (NAD(+)), catalytic subunit (313 aa).

FMN-binding positions include S21 and 45–46; that span reads KA. Substrate contacts are provided by residues K45 and 69 to 73; that span reads NAIGL. The FMN site is built by N99 and N127. Position 127 (N127) interacts with substrate. The active-site Nucleophile is C130. FMN contacts are provided by K165 and I191. Residue 192 to 193 coordinates substrate; the sequence is NT. FMN contacts are provided by residues G217, 243 to 244, and 265 to 266; these read GG and GT.

This sequence belongs to the dihydroorotate dehydrogenase family. Type 1 subfamily. Heterotetramer of 2 PyrK and 2 PyrD type B subunits. FMN serves as cofactor.

It is found in the cytoplasm. It carries out the reaction (S)-dihydroorotate + NAD(+) = orotate + NADH + H(+). It participates in pyrimidine metabolism; UMP biosynthesis via de novo pathway; orotate from (S)-dihydroorotate (NAD(+) route): step 1/1. In terms of biological role, catalyzes the conversion of dihydroorotate to orotate with NAD(+) as electron acceptor. This is Dihydroorotate dehydrogenase B (NAD(+)), catalytic subunit (pyrD) from Geobacillus sp. (strain WCH70).